A 396-amino-acid polypeptide reads, in one-letter code: Stearoyl-[acyl-carrier-protein] 9-desaturase, chloroplastic (396 aa).

The N-terminal 33 residues, 1-33, are a transit peptide targeting the chloroplast; the sequence is MALKLNPFLSQTQKLPSFALPPMASTRSPKFYM. Residues glutamate 138, glutamate 176, histidine 179, glutamate 229, glutamate 262, and histidine 265 each coordinate Fe cation.

Belongs to the fatty acid desaturase type 2 family. As to quaternary structure, homodimer. Requires Fe(2+) as cofactor. In terms of tissue distribution, higher levels in developing seeds than in leaf and root tissues.

It localises to the plastid. Its subcellular location is the chloroplast. It catalyses the reaction octadecanoyl-[ACP] + 2 reduced [2Fe-2S]-[ferredoxin] + O2 + 2 H(+) = (9Z)-octadecenoyl-[ACP] + 2 oxidized [2Fe-2S]-[ferredoxin] + 2 H2O. The protein operates within lipid metabolism; fatty acid metabolism. In terms of biological role, converts stearoyl-ACP to oleoyl-ACP by introduction of a cis double bond between carbons 9 and 10 of the acyl chain. This Ricinus communis (Castor bean) protein is Stearoyl-[acyl-carrier-protein] 9-desaturase, chloroplastic.